We begin with the raw amino-acid sequence, 399 residues long: S-adenosylmethionine synthase (399 aa).

H15 is an ATP binding site. Residue D17 coordinates Mg(2+). E43 serves as a coordination point for K(+). 2 residues coordinate L-methionine: E56 and Q99. Residues 99–109 (QSADIAQGVDN) are flexible loop. Residues 174-176 (DGK), 244-245 (RF), D253, 259-260 (RK), A276, and K280 contribute to the ATP site. An L-methionine-binding site is contributed by D253. K284 is an L-methionine binding site.

It belongs to the AdoMet synthase family. In terms of assembly, homotetramer; dimer of dimers. Requires Mg(2+) as cofactor. K(+) is required as a cofactor.

The protein resides in the cytoplasm. The enzyme catalyses L-methionine + ATP + H2O = S-adenosyl-L-methionine + phosphate + diphosphate. It functions in the pathway amino-acid biosynthesis; S-adenosyl-L-methionine biosynthesis; S-adenosyl-L-methionine from L-methionine: step 1/1. In terms of biological role, catalyzes the formation of S-adenosylmethionine (AdoMet) from methionine and ATP. The overall synthetic reaction is composed of two sequential steps, AdoMet formation and the subsequent tripolyphosphate hydrolysis which occurs prior to release of AdoMet from the enzyme. In Salinispora tropica (strain ATCC BAA-916 / DSM 44818 / JCM 13857 / NBRC 105044 / CNB-440), this protein is S-adenosylmethionine synthase.